The primary structure comprises 414 residues: MATSNSSASLPTLFWVNGSGDSVLSTDGAAMPVQFLVLRIMVALAYGLVGIIGLLGNLAVLWVLGNCGQRVPGLSSDTFVFSLALADLGLALTLPFWATESAMDFHWPFGSALCKVVLTTTVLSIYASTFLITALSIARYWVVAMAVGPGSHLSVFWARVVTLAVWVAAALVTVPTAIFGAEVELWGVCLCLLRFPSRYWLGAYQLQRVVLAFIVPLGVITTSYLLLLAFLERQQRCRPRQWQDSRVVARSVRVLVASFALCWVPNHVVTLWEILVRFDLVPWDSTFYTFHTYILPITTCLAHSNSCLNPVIYCLLRREPQQVLVSSFRALWSRLWPQRKACMEQMALKEVGGRTVASTQESGSSRTHTNTMEHLDEGCSLNTLLSETYQGQSPQILGRSSCSLSQAAVSPGEV.

Residues 1 to 43 (MATSNSSASLPTLFWVNGSGDSVLSTDGAAMPVQFLVLRIMVA) are Extracellular-facing. 2 N-linked (GlcNAc...) asparagine glycosylation sites follow: asparagine 5 and asparagine 17. Residues 44-64 (LAYGLVGIIGLLGNLAVLWVL) form a helical membrane-spanning segment. Residues 65–77 (GNCGQRVPGLSSD) lie on the Cytoplasmic side of the membrane. Residues 78–98 (TFVFSLALADLGLALTLPFWA) form a helical membrane-spanning segment. Over 99-116 (TESAMDFHWPFGSALCKV) the chain is Extracellular. A disulfide bridge links cysteine 114 with cysteine 191. The chain crosses the membrane as a helical span at residues 117 to 137 (VLTTTVLSIYASTFLITALSI). At 138–155 (ARYWVVAMAVGPGSHLSV) the chain is on the cytoplasmic side. The chain crosses the membrane as a helical span at residues 156-176 (FWARVVTLAVWVAAALVTVPT). Residues 177 to 209 (AIFGAEVELWGVCLCLLRFPSRYWLGAYQLQRV) are Extracellular-facing. A helical transmembrane segment spans residues 210 to 230 (VLAFIVPLGVITTSYLLLLAF). Residues 231 to 255 (LERQQRCRPRQWQDSRVVARSVRVL) are Cytoplasmic-facing. The chain crosses the membrane as a helical span at residues 256-276 (VASFALCWVPNHVVTLWEILV). At 277–293 (RFDLVPWDSTFYTFHTY) the chain is on the extracellular side. A helical transmembrane segment spans residues 294–316 (ILPITTCLAHSNSCLNPVIYCLL). The Cytoplasmic portion of the chain corresponds to 317–414 (RREPQQVLVS…SQAAVSPGEV (98 aa)).

The protein belongs to the G-protein coupled receptor 1 family. As to expression, detected only in bone marrow.

The protein localises to the cell membrane. In terms of biological role, high affinity receptor for INSL5. Also acts as a receptor for RLN3/relaxin-3, as well as bradykinin and kallidin. Binding of the ligand inhibit cAMP accumulation. This Mus musculus (Mouse) protein is Relaxin-3 receptor 2 (Rxfp4).